A 319-amino-acid chain; its full sequence is Coiled-coil domain-containing protein PF3D7_1144200 (319 aa).

The segment covering Met-1 to Asp-12 has biased composition (basic and acidic residues). Disordered regions lie at residues Met-1–Ser-43 and Lys-112–Asn-158. A compositionally biased stretch (polar residues) spans Cys-16 to Pro-26. 2 stretches are compositionally biased toward basic and acidic residues: residues Lys-27–Lys-36 and Lys-112–Thr-131. Coiled coils occupy residues Asp-100–Ser-134, Glu-166–Asn-242, and Asn-281–Ile-310. Residues Asn-132 to Asn-150 are compositionally biased toward low complexity.

The protein is Coiled-coil domain-containing protein PF3D7_1144200 of Plasmodium falciparum (isolate 3D7).